We begin with the raw amino-acid sequence, 940 residues long: MSDYKFTLNLPETEFPMRGNLANREPEMLERWTKDGLYQQIRDSRIGRTPFILHDGPPYANGSIHIGHSVNKILKDIIIKSKTMSGFDAPYVPGWDCHGLPIELKVEQKVGKPGQKISAAEFREECRKYAAEQVNGQREDFIRLGVLGDWQNPYLTMDFSTEANIVRSLSKVIESGHLHKGVKPVHWCTDCGSALAEAEVEYEDKTSPAIDVAFVAADSKAVAAKFGVSDYSHPVSMVIWTTTPWTLPANRALSLSPELDYSLVEFEKDGVTQALILAEVLVESCLTRYNVESHTVLGSAKGAAFELVRFNHPFLDFDVPAILGDHVTTDAGTGIVHTAPGHGQDDFVVGQKYGLEVANPVGDNGVYKPDTEYFAGQHVFKANDNVVALLREKSALLNHVAYRHSYPHCWRHKTPIIFRATPQWFISMDNHGLRTQALKEIEQTQWIPDWGQSRIEKMVENRPDWCISRQRTWGVPITLFVNRETEELHPDSVSLMERVASRIEQQGIQAWWDLDAAELLGDEAEQYRKVTDTLDVWFDSGSTFSSVVAARPEFHGHGVDLYLEGSDQHRGWFMSSLMISTAMNGKAPYKQVLTHGFTVDGKGRKMSKSIGNVIAPQTVTNKLGADILRLWVAATDYSGEMTVSDEILNRSADAYRRIRNTARFLLANLNGFEPAKDLVAVEDMVALDRWVVRRAAALQQEIIEAYEQYNFHIVTQKLMQFCSVELGSFYLDIIKDRQYTAKQEGHARRSCQSALYLISEAMVRWIAPILSFTADEVWQLLPGERDAYVFTQEWYQGLKSVTLATDLSDDYWQQLLTVRNEVNKVIEQARRDKRIGGSLEAEVTLFADAALTEQLTHIGDELRFVLLTSEAKVLPLADATSEAVETELASLKLLVASSTAEKCERCWHHREEVGTIEAHPTLCTRCVTNIEGDGEVRLFA.

The 'HIGH' region signature appears at 58 to 68 (PYANGSIHIGH). Glu-564 is an L-isoleucyl-5'-AMP binding site. The 'KMSKS' region signature appears at 605 to 609 (KMSKS). Lys-608 is a binding site for ATP. Zn(2+) is bound by residues Cys-903, Cys-906, Cys-923, and Cys-926.

The protein belongs to the class-I aminoacyl-tRNA synthetase family. IleS type 1 subfamily. Monomer. The cofactor is Zn(2+).

Its subcellular location is the cytoplasm. It catalyses the reaction tRNA(Ile) + L-isoleucine + ATP = L-isoleucyl-tRNA(Ile) + AMP + diphosphate. Catalyzes the attachment of isoleucine to tRNA(Ile). As IleRS can inadvertently accommodate and process structurally similar amino acids such as valine, to avoid such errors it has two additional distinct tRNA(Ile)-dependent editing activities. One activity is designated as 'pretransfer' editing and involves the hydrolysis of activated Val-AMP. The other activity is designated 'posttransfer' editing and involves deacylation of mischarged Val-tRNA(Ile). The polypeptide is Isoleucine--tRNA ligase (Shewanella baltica (strain OS223)).